The chain runs to 209 residues: Ribosomal RNA large subunit methyltransferase E (209 aa).

G63, W65, D83, D99, and D124 together coordinate S-adenosyl-L-methionine. K164 acts as the Proton acceptor in catalysis.

It belongs to the class I-like SAM-binding methyltransferase superfamily. RNA methyltransferase RlmE family.

It is found in the cytoplasm. The enzyme catalyses uridine(2552) in 23S rRNA + S-adenosyl-L-methionine = 2'-O-methyluridine(2552) in 23S rRNA + S-adenosyl-L-homocysteine + H(+). Specifically methylates the uridine in position 2552 of 23S rRNA at the 2'-O position of the ribose in the fully assembled 50S ribosomal subunit. This Colwellia psychrerythraea (strain 34H / ATCC BAA-681) (Vibrio psychroerythus) protein is Ribosomal RNA large subunit methyltransferase E.